A 156-amino-acid polypeptide reads, in one-letter code: Small ribosomal subunit protein uS7 (156 aa).

It belongs to the universal ribosomal protein uS7 family. Part of the 30S ribosomal subunit. Contacts proteins S9 and S11.

In terms of biological role, one of the primary rRNA binding proteins, it binds directly to 16S rRNA where it nucleates assembly of the head domain of the 30S subunit. Is located at the subunit interface close to the decoding center, probably blocks exit of the E-site tRNA. The chain is Small ribosomal subunit protein uS7 from Pectobacterium carotovorum subsp. carotovorum (strain PC1).